The following is a 457-amino-acid chain: MGKEDGFRTQKRVSTASSAAAGVLPTTMASGGVRRPPPRGRQIQKTFNNVKMTILCGFVTILVLRGTIGINFGTSDADVVNQNIIEETNRLLAEIRSDSDPTDSNEPPDSDLDLNMTYTLGPKITNWDQKRKLWLTQNPDFPSFINGKAKVLLLTGSPPKPCDNPIGDHYLLKSVKNKIDYCRIHGIEIVYNMAHLDKELAGYWAKLPMIRRLMLSHPEIEWIWWMDSDALFTDMVFEIPLSRYENHNLVIHGYPDLLFDQKSWIALNTGSFLFRNCQWSLDLLDAWAPMGPKGPIREEAGKILTANLKGRPAFEADDQSALIYLLLSQKETWMEKVFVENQYYLHGFWEGLVDKYEEMMEKYHPGLGDERWPFITHFVGCKPCGSYADYAVERCLKSMERAFNFADNQVLKLYGFGHRGLLSPKIKRIRNETTFPLKFVDRFDIRRTTPLKIEARS.

The disordered stretch occupies residues 1–40; sequence MGKEDGFRTQKRVSTASSAAAGVLPTTMASGGVRRPPPRG. At 1–51 the chain is on the cytoplasmic side; that stretch reads MGKEDGFRTQKRVSTASSAAAGVLPTTMASGGVRRPPPRGRQIQKTFNNVK. The helical; Signal-anchor for type II membrane protein transmembrane segment at 52–71 threads the bilayer; that stretch reads MTILCGFVTILVLRGTIGIN. Topologically, residues 72–457 are lumenal; the sequence is FGTSDADVVN…TTPLKIEARS (386 aa). Asn-115 and Asn-431 each carry an N-linked (GlcNAc...) asparagine glycan.

It belongs to the glycosyltransferase 34 family.

It localises to the golgi apparatus membrane. It carries out the reaction Transfers an alpha-D-xylosyl residue from UDP-D-xylose to a glucose residue in xyloglucan, forming an alpha-(1-&gt;6)-D-xylosyl-D-glucose linkage.. Probable xyloglucan xylosyltransferase involved in the biosynthesis of xyloglucan. In Arabidopsis thaliana (Mouse-ear cress), this protein is Probable xyloglucan 6-xylosyltransferase 3.